The following is a 360-amino-acid chain: Vomilenine reductase (360 aa).

In terms of domain architecture, Enoyl reductase (ER) spans 23–351 (GLLSPFNFSR…KADVKYRFVI (329 aa)). Cys50 contributes to the Zn(2+) binding site. Ser52 contributes to the an alcohol binding site. Ser52 contacts NADP(+). Residues Asp53, His72, Glu73, Cys103, Cys106, Cys109, Cys117, and Cys166 each contribute to the Zn(2+) site. His72 lines the an alcohol pocket. Positions 192, 194, 195, 214, 215, 216, 219, 220, 277, 279, 301, and 348 each coordinate NADP(+).

It belongs to the zinc-containing alcohol dehydrogenase family. Class-P subfamily. As to quaternary structure, homodimer. The cofactor is Zn(2+). As to expression, confined to roots.

It is found in the cytoplasm. The catalysed reaction is (2R)-1,2-dihydrovomilenine + NADP(+) = vomilenine + NADPH + H(+). It participates in alkaloid biosynthesis; ajmaline biosynthesis. With respect to regulation, inhibited by EDTA and p-hydroxymercuribenzoate, a sulfhydryl reagent. In terms of biological role, alcohol dehydrogenase involved in the biosynthesis of ajmaline-type monoterpenoid indole alkaloids (MIAs) natural products, important plant-derived pharmaceuticals used in the therapy of heart disorders. Catalyzes the conversion of vomilenine to 1,2-dihydrovomilenine, an intermediate chemical in the biosynthesis of ajmaline. This chain is Vomilenine reductase, found in Rauvolfia serpentina (Serpentine wood).